Here is a 103-residue protein sequence, read N- to C-terminus: Small ribosomal subunit protein uS10 (103 aa).

It belongs to the universal ribosomal protein uS10 family. In terms of assembly, part of the 30S ribosomal subunit.

In terms of biological role, involved in the binding of tRNA to the ribosomes. The sequence is that of Small ribosomal subunit protein uS10 from Sulfurovum sp. (strain NBC37-1).